The primary structure comprises 100 residues: NADH-quinone oxidoreductase subunit K (100 aa).

A run of 3 helical transmembrane segments spans residues 4–24, 28–48, and 60–80; these read LQHG…GLVI, LLFM…AFVV, and VMYI…LALL.

This sequence belongs to the complex I subunit 4L family. In terms of assembly, NDH-1 is composed of 13 different subunits. Subunits NuoA, H, J, K, L, M, N constitute the membrane sector of the complex.

The protein resides in the cell inner membrane. The catalysed reaction is a quinone + NADH + 5 H(+)(in) = a quinol + NAD(+) + 4 H(+)(out). NDH-1 shuttles electrons from NADH, via FMN and iron-sulfur (Fe-S) centers, to quinones in the respiratory chain. The immediate electron acceptor for the enzyme in this species is believed to be ubiquinone. Couples the redox reaction to proton translocation (for every two electrons transferred, four hydrogen ions are translocated across the cytoplasmic membrane), and thus conserves the redox energy in a proton gradient. This is NADH-quinone oxidoreductase subunit K from Musicola paradisiaca (strain Ech703) (Dickeya paradisiaca).